Here is a 125-residue protein sequence, read N- to C-terminus: Small ribosomal subunit protein uS13 (125 aa).

The interval 90–125 (QRHRKGLPVRGQRTKTNARTRKGPKRTVAGKKKATK) is disordered.

This sequence belongs to the universal ribosomal protein uS13 family. As to quaternary structure, part of the 30S ribosomal subunit. Forms a loose heterodimer with protein S19. Forms two bridges to the 50S subunit in the 70S ribosome.

Its function is as follows. Located at the top of the head of the 30S subunit, it contacts several helices of the 16S rRNA. In the 70S ribosome it contacts the 23S rRNA (bridge B1a) and protein L5 of the 50S subunit (bridge B1b), connecting the 2 subunits; these bridges are implicated in subunit movement. Contacts the tRNAs in the A and P-sites. This is Small ribosomal subunit protein uS13 from Bifidobacterium adolescentis (strain ATCC 15703 / DSM 20083 / NCTC 11814 / E194a).